Consider the following 220-residue polypeptide: Protein-L-isoaspartate O-methyltransferase (220 aa).

Ser64 is an active-site residue.

Belongs to the methyltransferase superfamily. L-isoaspartyl/D-aspartyl protein methyltransferase family.

The protein resides in the cytoplasm. It carries out the reaction [protein]-L-isoaspartate + S-adenosyl-L-methionine = [protein]-L-isoaspartate alpha-methyl ester + S-adenosyl-L-homocysteine. Its function is as follows. Catalyzes the methyl esterification of L-isoaspartyl residues in peptides and proteins that result from spontaneous decomposition of normal L-aspartyl and L-asparaginyl residues. It plays a role in the repair and/or degradation of damaged proteins. The sequence is that of Protein-L-isoaspartate O-methyltransferase from Thermococcus onnurineus (strain NA1).